Consider the following 530-residue polypeptide: Membrane protein insertase YidC (530 aa).

A run of 4 helical transmembrane segments spans residues 5-25 (VVIA…MFPP), 348-368 (YGLA…PLTH), 418-438 (LPML…MFSI), and 492-512 (PVVF…YWLI).

The protein belongs to the OXA1/ALB3/YidC family. Type 1 subfamily. Interacts with the Sec translocase complex via SecD. Specifically interacts with transmembrane segments of nascent integral membrane proteins during membrane integration.

The protein localises to the cell inner membrane. In terms of biological role, required for the insertion and/or proper folding and/or complex formation of integral membrane proteins into the membrane. Involved in integration of membrane proteins that insert both dependently and independently of the Sec translocase complex, as well as at least some lipoproteins. Aids folding of multispanning membrane proteins. The sequence is that of Membrane protein insertase YidC from Geotalea daltonii (strain DSM 22248 / JCM 15807 / FRC-32) (Geobacter daltonii).